The chain runs to 197 residues: Imidazoleglycerol-phosphate dehydratase (197 aa).

It belongs to the imidazoleglycerol-phosphate dehydratase family.

It is found in the cytoplasm. It catalyses the reaction D-erythro-1-(imidazol-4-yl)glycerol 3-phosphate = 3-(imidazol-4-yl)-2-oxopropyl phosphate + H2O. The protein operates within amino-acid biosynthesis; L-histidine biosynthesis; L-histidine from 5-phospho-alpha-D-ribose 1-diphosphate: step 6/9. The protein is Imidazoleglycerol-phosphate dehydratase of Hahella chejuensis (strain KCTC 2396).